The following is a 68-amino-acid chain: Large ribosomal subunit protein uL29 (68 aa).

Belongs to the universal ribosomal protein uL29 family.

The polypeptide is Large ribosomal subunit protein uL29 (Streptococcus suis (strain 98HAH33)).